A 214-amino-acid chain; its full sequence is Thiopurine S-methyltransferase (214 aa).

Residues Trp-10, Leu-44, Glu-65, and Arg-122 each coordinate S-adenosyl-L-methionine.

This sequence belongs to the class I-like SAM-binding methyltransferase superfamily. TPMT family.

The protein localises to the cytoplasm. The enzyme catalyses S-adenosyl-L-methionine + a thiopurine = S-adenosyl-L-homocysteine + a thiopurine S-methylether.. In Teredinibacter turnerae (strain ATCC 39867 / T7901), this protein is Thiopurine S-methyltransferase.